Reading from the N-terminus, the 270-residue chain is Acyl-[acyl-carrier-protein]--UDP-N-acetylglucosamine O-acyltransferase (270 aa).

It belongs to the transferase hexapeptide repeat family. LpxA subfamily. Homotrimer.

The protein resides in the cytoplasm. The enzyme catalyses a (3R)-hydroxyacyl-[ACP] + UDP-N-acetyl-alpha-D-glucosamine = a UDP-3-O-[(3R)-3-hydroxyacyl]-N-acetyl-alpha-D-glucosamine + holo-[ACP]. It functions in the pathway glycolipid biosynthesis; lipid IV(A) biosynthesis; lipid IV(A) from (3R)-3-hydroxytetradecanoyl-[acyl-carrier-protein] and UDP-N-acetyl-alpha-D-glucosamine: step 1/6. Involved in the biosynthesis of lipid A, a phosphorylated glycolipid that anchors the lipopolysaccharide to the outer membrane of the cell. In Helicobacter pylori (strain Shi470), this protein is Acyl-[acyl-carrier-protein]--UDP-N-acetylglucosamine O-acyltransferase.